The primary structure comprises 355 residues: MENNNYNNHVSGENSGGQRGHFFYGGNQVLGGAAPIYGRGGDCYDPMIVKTEGGGSTSHHNHTFHYPSIIRNHHHDSTETSGGGAGAGEVIEALKAKIIAHPQCSNLLDAYMDCQKVGAPPEVAARLSAVRQEFEARQRRSLTDRDVSKDPELDQFMEAYYDMLVKYREELTRPLQEAMEFMQKIEAQLNMLGNAPVRIFNSEDKCEGVGSSEEDQDNSGGETELPEIDPRAEDRELKNHLLRKYSGYLSSLKQELSKKKKKGKLPKDARQKLITWWELHYKWPYPSESEKVALAESTGLDQKQINNWFINQRKRHWKPSEDMQFMVMDGLHPQSAAALYMEGHYMGEGPFRLGQ.

Residues 205 to 233 (KCEGVGSSEEDQDNSGGETELPEIDPRAE) are disordered. The region spanning 236 to 256 (ELKNHLLRKYSGYLSSLKQEL) is the ELK domain. The homeobox; TALE-type DNA-binding region spans 257-320 (SKKKKKGKLP…NQRKRHWKPS (64 aa)).

It belongs to the TALE/KNOX homeobox family. As to expression, expressed in the apical meristems, in the newly emerged lateral primordia in the floral bud, in their vascular bundles and in the cortex parenchyma of the floral pedicle. Also present in the lateral tips of leaf primordia.

The protein resides in the nucleus. Functionally, appears to be involved in meristem formation and in the regulation of leaf morphology. Misexpression makes the leaf more compound which is always associated with growth retardation and loss of apical dominance, resulting in dwarfed, bushy plants. Probably binds to the DNA sequence 5'-TGAC-3'. This chain is Homeotic protein knotted-1 (KN1), found in Solanum lycopersicum (Tomato).